The primary structure comprises 323 residues: MEMNLRIEDLNEETKTLISSLPSDKDFTGKTICKYQGCWYTHNVLQAVLNFQKSFKPQDTDIIVASFPKCGTTWLKALTFALLHRSKQPSHDDDHPLLSNNPHVLVPYFEIDLYLRSENPDLTKFSSSPRLFSTHVPSHTLQEGLKGSTCKIVYISRNVKDTLVSYWHFFTKKQTDEKIISSFEDTFEMFCRGVSIFGPFWDHVLSYWRGSLEDPNHVLFMKFEEMKAEPRDQIKKFAEFLGCPFTKEEEESGSVDEIIDLCSLRNLSSLEINKTGKLNSGRENKMFFRKGEVGDWKNYLTPEMENKIDMIIQEKLQNSGLKF.

69–74 (KCGTTW) is a 3'-phosphoadenylyl sulfate binding site. Histidine 135 acts as the Proton acceptor in catalysis. Residues arginine 157, serine 165, and 289 to 291 (RKG) contribute to the 3'-phosphoadenylyl sulfate site.

The protein belongs to the sulfotransferase 1 family. Expressed in inflorescence stems, roots and siliques.

The protein resides in the cytoplasm. Functionally, sulfotransferase that utilizes 3'-phospho-5'-adenylyl sulfate (PAPS) as sulfonate donor to specifically catalyze the sulfate conjugation of flavones and flavonols. Strictly specific for the position 7. Substrate preference is kaempferol 3-sulfate &gt; isorhamnetin &gt; kaempferol. The protein is Cytosolic sulfotransferase 5 (SOT5) of Arabidopsis thaliana (Mouse-ear cress).